The sequence spans 260 residues: Proliferating cell nuclear antigen (260 aa).

The DNA-binding element occupies Arg-61–Lys-80. Residue Lys-164 forms a Glycyl lysine isopeptide (Lys-Gly) (interchain with G-Cter in ubiquitin) linkage.

Belongs to the PCNA family. In terms of assembly, homotrimer. Forms a complex with activator 1 heteropentamer in the presence of ATP. Component of the replisome complex. Monoubiquitinated by the ube2b-rad18 complex on Lys-164. Monoubiquitination at Lys-164 also takes place in undamaged proliferating cells, and is mediated by the dcx(dtl) complex, leading to enhance PCNA-dependent translesion DNA synthesis.

The protein localises to the nucleus. Its function is as follows. This protein is an auxiliary protein of DNA polymerase delta and is involved in the control of eukaryotic DNA replication by increasing the polymerase's processibility during elongation of the leading strand. In Haplochromis burtoni (Burton's mouthbrooder), this protein is Proliferating cell nuclear antigen (pcna).